The chain runs to 260 residues: Ribosome maturation factor RimP (260 aa).

Composition is skewed to basic and acidic residues over residues 189 to 199 (RRGRDAEREQL) and 215 to 227 (AREM…PRKE). The interval 189–260 (RRGRDAEREQ…QTTSDPHQGE (72 aa)) is disordered. Residues 228-242 (KTAKKPLPKNTKAHR) are compositionally biased toward basic residues.

This sequence belongs to the RimP family.

The protein resides in the cytoplasm. In terms of biological role, required for maturation of 30S ribosomal subunits. The protein is Ribosome maturation factor RimP of Afipia carboxidovorans (strain ATCC 49405 / DSM 1227 / KCTC 32145 / OM5) (Oligotropha carboxidovorans).